We begin with the raw amino-acid sequence, 428 residues long: Enolase (428 aa).

Q162 is a (2R)-2-phosphoglycerate binding site. The active-site Proton donor is the E204. Mg(2+) is bound by residues D241, E286, and D313. (2R)-2-phosphoglycerate contacts are provided by K338, R367, S368, and K389. The Proton acceptor role is filled by K338.

Belongs to the enolase family. Component of the RNA degradosome, a multiprotein complex involved in RNA processing and mRNA degradation. Mg(2+) is required as a cofactor.

It localises to the cytoplasm. The protein localises to the secreted. It is found in the cell surface. The catalysed reaction is (2R)-2-phosphoglycerate = phosphoenolpyruvate + H2O. Its pathway is carbohydrate degradation; glycolysis; pyruvate from D-glyceraldehyde 3-phosphate: step 4/5. Functionally, catalyzes the reversible conversion of 2-phosphoglycerate (2-PG) into phosphoenolpyruvate (PEP). It is essential for the degradation of carbohydrates via glycolysis. This is Enolase from Vesicomyosocius okutanii subsp. Calyptogena okutanii (strain HA).